Consider the following 137-residue polypeptide: Small ribosomal subunit protein bS6 (137 aa).

Positions 96–137 are disordered; sequence VTEQSIMLKQKEERAERAPRRDDREERAPRREEEAKPEAAAE. Positions 104–137 are enriched in basic and acidic residues; sequence KQKEERAERAPRRDDREERAPRREEEAKPEAAAE.

Belongs to the bacterial ribosomal protein bS6 family.

Its function is as follows. Binds together with bS18 to 16S ribosomal RNA. This chain is Small ribosomal subunit protein bS6, found in Vibrio atlanticus (strain LGP32) (Vibrio splendidus (strain Mel32)).